A 156-amino-acid chain; its full sequence is uncharacterized protein (156 aa).

The signal sequence occupies residues 1 to 18 (MKKLLSIFLMAFSLNAFA). The Thioredoxin domain occupies 19-156 (QTNLADVQLK…AEQIRVFAEK (138 aa)). The cysteines at positions 54 and 57 are disulfide-linked.

This sequence belongs to the thioredoxin family.

This is an uncharacterized protein from Haemophilus influenzae (strain ATCC 51907 / DSM 11121 / KW20 / Rd).